A 750-amino-acid chain; its full sequence is Photosystem I P700 chlorophyll a apoprotein A1 (750 aa).

8 helical membrane passes run Val70 to Ala93, Leu156 to His179, Leu195 to Leu219, Thr291 to Tyr309, Trp346 to Tyr369, Leu385 to Val411, Ala433 to His455, and Phe531 to Leu549. Residues Cys573 and Cys582 each contribute to the [4Fe-4S] cluster site. 2 helical membrane-spanning segments follow: residues His589–Trp610 and Leu664–Phe686. Residue His675 coordinates chlorophyll a'. Positions 683 and 691 each coordinate chlorophyll a. Trp692 lines the phylloquinone pocket. A helical transmembrane segment spans residues Ala724–Ala744.

It belongs to the PsaA/PsaB family. In terms of assembly, the PsaA/B heterodimer binds the P700 chlorophyll special pair and subsequent electron acceptors. PSI consists of a core antenna complex that captures photons, and an electron transfer chain that converts photonic excitation into a charge separation. The eukaryotic PSI reaction center is composed of at least 11 subunits. The cofactor is P700 is a chlorophyll a/chlorophyll a' dimer, A0 is one or more chlorophyll a, A1 is one or both phylloquinones and FX is a shared 4Fe-4S iron-sulfur center..

It is found in the plastid. It localises to the chloroplast thylakoid membrane. It carries out the reaction reduced [plastocyanin] + hnu + oxidized [2Fe-2S]-[ferredoxin] = oxidized [plastocyanin] + reduced [2Fe-2S]-[ferredoxin]. PsaA and PsaB bind P700, the primary electron donor of photosystem I (PSI), as well as the electron acceptors A0, A1 and FX. PSI is a plastocyanin-ferredoxin oxidoreductase, converting photonic excitation into a charge separation, which transfers an electron from the donor P700 chlorophyll pair to the spectroscopically characterized acceptors A0, A1, FX, FA and FB in turn. Oxidized P700 is reduced on the lumenal side of the thylakoid membrane by plastocyanin. This is Photosystem I P700 chlorophyll a apoprotein A1 from Psilotum nudum (Whisk fern).